The sequence spans 124 residues: Fluoride-specific ion channel FluC (124 aa).

3 consecutive transmembrane segments (helical) span residues 5-27 (LFVALGGSIGAVFRYLLSIFMLQ), 70-90 (VGLLGALTTFSTFSNETLLLI), and 95-115 (WIKAFFNIALNLCLCIFMVYL). 2 residues coordinate Na(+): glycine 74 and threonine 77.

Belongs to the fluoride channel Fluc/FEX (TC 1.A.43) family.

Its subcellular location is the cell inner membrane. It catalyses the reaction fluoride(in) = fluoride(out). Its activity is regulated as follows. Na(+) is not transported, but it plays an essential structural role and its presence is essential for fluoride channel function. Fluoride-specific ion channel. Important for reducing fluoride concentration in the cell, thus reducing its toxicity. The protein is Fluoride-specific ion channel FluC of Shewanella sediminis (strain HAW-EB3).